The primary structure comprises 545 residues: Chaperonin GroEL (545 aa).

Residues 30–33 (TLGP), lysine 51, 87–91 (DGTTT), glycine 415, and aspartate 496 contribute to the ATP site. The interval 526-545 (PEPKAPAGGMPDMGGMGGMM) is disordered. Residues 536–545 (PDMGGMGGMM) are compositionally biased toward gly residues.

This sequence belongs to the chaperonin (HSP60) family. As to quaternary structure, forms a cylinder of 14 subunits composed of two heptameric rings stacked back-to-back. Interacts with the co-chaperonin GroES.

It localises to the cytoplasm. The catalysed reaction is ATP + H2O + a folded polypeptide = ADP + phosphate + an unfolded polypeptide.. Together with its co-chaperonin GroES, plays an essential role in assisting protein folding. The GroEL-GroES system forms a nano-cage that allows encapsulation of the non-native substrate proteins and provides a physical environment optimized to promote and accelerate protein folding. This chain is Chaperonin GroEL, found in Paracoccus denitrificans (strain Pd 1222).